An 874-amino-acid chain; its full sequence is Dynein regulatory complex subunit 7 (874 aa).

Coiled-coil stretches lie at residues 1–67 (MEVL…SAEL) and 257–297 (RFEQ…DALH). The segment covering 386 to 400 (TEEDDSGINDEDDVE) has biased composition (acidic residues). The interval 386–410 (TEEDDSGINDEDDVENLGKEDEDKS) is disordered. The span at 401–410 (NLGKEDEDKS) shows a compositional bias: basic and acidic residues. 2 coiled-coil regions span residues 688-711 (QVWESELEVLEILKLREEEEAAHT) and 781-807 (KQRLINKANLIQARFEKETQELQKKQQ).

The protein belongs to the DRC7 family. Component of the nexin-dynein regulatory complex (N-DRC). Interacts with TCTE1/DRC5. Interacts with DRC3 and GAS8/DRC4.

The protein resides in the cell projection. Its subcellular location is the cilium. It localises to the flagellum. The protein localises to the cytoplasm. It is found in the cytoskeleton. The protein resides in the cilium axoneme. Its subcellular location is the flagellum axoneme. Its function is as follows. Component of the nexin-dynein regulatory complex (N-DRC) a key regulator of ciliary/flagellar motility which maintains the alignment and integrity of the distal axoneme and regulates microtubule sliding in motile axonemes. Involved in the regulation of flagellar motility. Essential for male fertility, sperm head morphogenesis and sperm flagellum formation. The sequence is that of Dynein regulatory complex subunit 7 (DRC7) from Homo sapiens (Human).